A 491-amino-acid chain; its full sequence is Glutamyl-tRNA(Gln) amidotransferase subunit A (491 aa).

Residues Lys80 and Ser155 each act as charge relay system in the active site. Ser179 (acyl-ester intermediate) is an active-site residue.

This sequence belongs to the amidase family. GatA subfamily. In terms of assembly, heterotrimer of A, B and C subunits.

It catalyses the reaction L-glutamyl-tRNA(Gln) + L-glutamine + ATP + H2O = L-glutaminyl-tRNA(Gln) + L-glutamate + ADP + phosphate + H(+). Its function is as follows. Allows the formation of correctly charged Gln-tRNA(Gln) through the transamidation of misacylated Glu-tRNA(Gln) in organisms which lack glutaminyl-tRNA synthetase. The reaction takes place in the presence of glutamine and ATP through an activated gamma-phospho-Glu-tRNA(Gln). The polypeptide is Glutamyl-tRNA(Gln) amidotransferase subunit A (Salinispora arenicola (strain CNS-205)).